The sequence spans 209 residues: Transmembrane protein 52 (209 aa).

The N-terminal stretch at 1–32 is a signal peptide; the sequence is MARGPLAARGLRLLLPLLPLLPLLPLPQVALG. Residues 56–76 traverse the membrane as a helical segment; the sequence is VGLILLAVLLLLLCGVTAGCV. Residues 145-209 are disordered; it reads AYSLYTPEPP…QLPPCSPGAP (65 aa). Positions 159–170 are enriched in basic and acidic residues; sequence EAVKMAKPREEG. The segment covering 186-202 has biased composition (polar residues); sequence LETTPVPQESGPNTQLP.

The protein localises to the membrane. The sequence is that of Transmembrane protein 52 (TMEM52) from Homo sapiens (Human).